Consider the following 498-residue polypeptide: Glycerol kinase (498 aa).

T11 is an ADP binding site. The ATP site is built by T11, T12, and S13. T11 provides a ligand contact to sn-glycerol 3-phosphate. Residue R15 participates in ADP binding. Sn-glycerol 3-phosphate contacts are provided by R81, E82, Y133, and D242. Glycerol is bound by residues R81, E82, Y133, D242, and Q243. 2 residues coordinate ADP: T264 and G307. The ATP site is built by T264, G307, Q311, and G411. An ADP-binding site is contributed by G411.

It belongs to the FGGY kinase family.

It carries out the reaction glycerol + ATP = sn-glycerol 3-phosphate + ADP + H(+). It participates in polyol metabolism; glycerol degradation via glycerol kinase pathway; sn-glycerol 3-phosphate from glycerol: step 1/1. Its activity is regulated as follows. Inhibited by fructose 1,6-bisphosphate (FBP). Its function is as follows. Key enzyme in the regulation of glycerol uptake and metabolism. Catalyzes the phosphorylation of glycerol to yield sn-glycerol 3-phosphate. This Afipia carboxidovorans (strain ATCC 49405 / DSM 1227 / KCTC 32145 / OM5) (Oligotropha carboxidovorans) protein is Glycerol kinase.